Reading from the N-terminus, the 143-residue chain is Small ribosomal subunit protein uS12 (143 aa).

The segment covering 1-20 (MGKCRGLRTARKLRSHRRDH) has biased composition (basic residues). The tract at residues 1 to 26 (MGKCRGLRTARKLRSHRRDHKWHDKQ) is disordered. Residue K37 forms a Glycyl lysine isopeptide (Lys-Gly) (interchain with G-Cter in SUMO2) linkage. K54 carries the post-translational modification N6-succinyllysine. P62 carries the 3-hydroxyproline modification. Residue K135 is modified to N6-acetyllysine.

Belongs to the universal ribosomal protein uS12 family. In terms of assembly, component of the 40S small ribosomal subunit. Part of the small subunit (SSU) processome, composed of more than 70 proteins and the RNA chaperone small nucleolar RNA (snoRNA) U3. As to quaternary structure, (Microbial infection) Interacts with the African swine fever virus (ASFV) ubiquitin-conjugating enzyme UBCv1; this interaction probably plays a role in the viral regulation of host protein synthesis. In terms of processing, hydroxylation at Pro-62 affects translation termination efficiency.

The protein localises to the cytoplasm. It is found in the cytosol. The protein resides in the rough endoplasmic reticulum. Its subcellular location is the nucleus. It localises to the nucleolus. Its function is as follows. Component of the ribosome, a large ribonucleoprotein complex responsible for the synthesis of proteins in the cell. The small ribosomal subunit (SSU) binds messenger RNAs (mRNAs) and translates the encoded message by selecting cognate aminoacyl-transfer RNA (tRNA) molecules. The large subunit (LSU) contains the ribosomal catalytic site termed the peptidyl transferase center (PTC), which catalyzes the formation of peptide bonds, thereby polymerizing the amino acids delivered by tRNAs into a polypeptide chain. The nascent polypeptides leave the ribosome through a tunnel in the LSU and interact with protein factors that function in enzymatic processing, targeting, and the membrane insertion of nascent chains at the exit of the ribosomal tunnel. Plays an important role in translational accuracy. Part of the small subunit (SSU) processome, first precursor of the small eukaryotic ribosomal subunit. During the assembly of the SSU processome in the nucleolus, many ribosome biogenesis factors, an RNA chaperone and ribosomal proteins associate with the nascent pre-rRNA and work in concert to generate RNA folding, modifications, rearrangements and cleavage as well as targeted degradation of pre-ribosomal RNA by the RNA exosome. This chain is Small ribosomal subunit protein uS12 (RPS23), found in Sus scrofa (Pig).